We begin with the raw amino-acid sequence, 717 residues long: Translation initiation factor eIF2B subunit epsilon (717 aa).

Residues 1–14 (MAATAAVPGAAAGR) show a composition bias toward low complexity. The tract at residues 1–37 (MAATAAVPGAAAGRASKRGGGGSGGGGTQGAEEEPPP) is disordered. An Omega-N-methylarginine modification is found at Arg18. The span at 18–29 (RGGGGSGGGGTQ) shows a compositional bias: gly residues. Ser23 is modified (phosphoserine). Glycyl lysine isopeptide (Lys-Gly) (interchain with G-Cter in ubiquitin) cross-links involve residues Lys57 and Lys99. Residue Ser126 is modified to Phosphoserine. Residues Lys137 and Lys213 each participate in a glycyl lysine isopeptide (Lys-Gly) (interchain with G-Cter in ubiquitin) cross-link. Residue Thr318 is modified to Phosphothreonine. The disordered stretch occupies residues 442-479 (GSVISLHPPDAEEDEDDGQFSDDSGADQEKEKVKLKGY). A phosphoserine mark is found at Ser446, Ser462, and Ser465. Acidic residues predominate over residues 452–467 (AEEDEDDGQFSDDSGA). Residue Lys501 forms a Glycyl lysine isopeptide (Lys-Gly) (interchain with G-Cter in ubiquitin) linkage. The disordered stretch occupies residues 517-538 (TEEESETESEGSVDPEELDSRA). The segment covering 519–533 (EESETESEGSVDPEE) has biased composition (acidic residues). Ser528 and Ser536 each carry phosphoserine. Residues 539–716 (GSPQLDDIRV…REAEEESSED (178 aa)) form the W2 domain. Ser540 carries the post-translational modification Phosphoserine; by DYRK2. Ser713 bears the Phosphoserine mark.

This sequence belongs to the eIF-2B gamma/epsilon subunits family. As to quaternary structure, component of the translation initiation factor 2B (eIF2B) complex which is a heterodecamer of two sets of five different subunits: alpha, beta, gamma, delta and epsilon. Subunits alpha, beta and delta comprise a regulatory subcomplex and subunits epsilon and gamma comprise a catalytic subcomplex. Within the complex, the hexameric regulatory complex resides at the center, with the two heterodimeric catalytic subcomplexes bound on opposite sides. Phosphorylated at Ser-540 by DYRK2; this is required for subsequent phosphorylation by GSK3B. Phosphorylated on serine and threonine residues by GSK3B; phosphorylation inhibits its function. In terms of processing, polyubiquitinated, probably by NEDD4.

It is found in the cytoplasm. Its subcellular location is the cytosol. With respect to regulation, activated by the chemical integrated stress response (ISR) inhibitor ISRIB which stimulates guanine nucleotide exchange factor activity for both phosphorylated and unphosphorylated eIF2. In terms of biological role, acts as a component of the translation initiation factor 2B (eIF2B) complex, which catalyzes the exchange of GDP for GTP on eukaryotic initiation factor 2 (eIF2) gamma subunit. Its guanine nucleotide exchange factor activity is repressed when bound to eIF2 complex phosphorylated on the alpha subunit, thereby limiting the amount of methionyl-initiator methionine tRNA available to the ribosome and consequently global translation is repressed. The protein is Translation initiation factor eIF2B subunit epsilon (Eif2b5) of Mus musculus (Mouse).